The chain runs to 318 residues: 4-diphosphocytidyl-2-C-methyl-D-erythritol kinase (318 aa).

Lys-13 is an active-site residue. Pro-101–Ala-111 lines the ATP pocket. Asp-143 is an active-site residue. The disordered stretch occupies residues Pro-298 to Ala-318.

The protein belongs to the GHMP kinase family. IspE subfamily.

It carries out the reaction 4-CDP-2-C-methyl-D-erythritol + ATP = 4-CDP-2-C-methyl-D-erythritol 2-phosphate + ADP + H(+). The protein operates within isoprenoid biosynthesis; isopentenyl diphosphate biosynthesis via DXP pathway; isopentenyl diphosphate from 1-deoxy-D-xylulose 5-phosphate: step 3/6. Catalyzes the phosphorylation of the position 2 hydroxy group of 4-diphosphocytidyl-2C-methyl-D-erythritol. This is 4-diphosphocytidyl-2-C-methyl-D-erythritol kinase from Saccharopolyspora erythraea (strain ATCC 11635 / DSM 40517 / JCM 4748 / NBRC 13426 / NCIMB 8594 / NRRL 2338).